A 510-amino-acid chain; its full sequence is Bifunctional purine biosynthesis protein PurH (510 aa).

Residues 1-142 (MRALLSVSDK…KNYKDVMVLC (142 aa)) enclose the MGS-like domain.

Belongs to the PurH family.

It carries out the reaction (6R)-10-formyltetrahydrofolate + 5-amino-1-(5-phospho-beta-D-ribosyl)imidazole-4-carboxamide = 5-formamido-1-(5-phospho-D-ribosyl)imidazole-4-carboxamide + (6S)-5,6,7,8-tetrahydrofolate. It catalyses the reaction IMP + H2O = 5-formamido-1-(5-phospho-D-ribosyl)imidazole-4-carboxamide. It functions in the pathway purine metabolism; IMP biosynthesis via de novo pathway; 5-formamido-1-(5-phospho-D-ribosyl)imidazole-4-carboxamide from 5-amino-1-(5-phospho-D-ribosyl)imidazole-4-carboxamide (10-formyl THF route): step 1/1. Its pathway is purine metabolism; IMP biosynthesis via de novo pathway; IMP from 5-formamido-1-(5-phospho-D-ribosyl)imidazole-4-carboxamide: step 1/1. The chain is Bifunctional purine biosynthesis protein PurH from Campylobacter jejuni subsp. jejuni serotype O:2 (strain ATCC 700819 / NCTC 11168).